Consider the following 341-residue polypeptide: Protein BEARSKIN2 (341 aa).

The region spanning 9–160 (VPPGFRFHPT…GWVVCRVFMK (152 aa)) is the NAC domain. A DNA-binding region spans residues 109 to 166 (IGMRKTLVFYKGRAPHGQKTDWIMHEYRLEDADDPQANPSEDGWVVCRVFMKKNLFKV).

In terms of tissue distribution, expressed throughout the root cap, in both columella (COL) and lateral root cap (LRC) cells, with higher levels in the COL-adjoining LRC than the upper LRC. Also present at low levels expression in the tips of cotyledons and the cotyledon vasculature, as weel as in vasculature of the first pair of true leaves and at the hydathodes.

Its subcellular location is the nucleus. Transcription activator. Together with BRN1 and SMB, regulates cellular maturation of root cap. Promotes the expression of genes involved in secondary cell walls (SCW) biosynthesis. This Arabidopsis thaliana (Mouse-ear cress) protein is Protein BEARSKIN2 (BRN2).